The sequence spans 127 residues: MRHRKSGRQLNRNSSHRKAMFSNMASSLVSHEIIKTTLPKAKELRRVIEPLITLAKTDSVANRRLAFARTRDNAVVAKLFTELGPRFAKRPGGYTRIMKCGFRTGDKAPMAYIELVDRPAQEAASAE.

The protein belongs to the bacterial ribosomal protein bL17 family. Part of the 50S ribosomal subunit. Contacts protein L32.

This is Large ribosomal subunit protein bL17 from Photobacterium profundum (strain SS9).